We begin with the raw amino-acid sequence, 383 residues long: D-aspartate oxidase 3 (383 aa).

Residues 1 to 17 (MLYALLLLFGGVSTVSS) form the signal peptide. Residues Lys56 and Ser63 each coordinate FAD. N-linked (GlcNAc...) asparagine glycosylation is found at Asn152, Asn271, and Asn320. Thr339 lines the FAD pocket. N-linked (GlcNAc...) asparagine glycosylation is present at Asn371.

Belongs to the DAMOX/DASOX family. Requires FAD as cofactor. In both sexes, present in coelomocytes (at protein level). Expressed in hypodermal cells and the proximal gonadal sheath cells in adult hermaphrodites (at protein level). Also expressed in probable head mesodermal cells and unidentified cells in the head, and vulval muscles in adult hermaphrodites. Expressed in the seminal vesicle, spicule and tail cells in adult males (at protein level).

Its subcellular location is the secreted. It carries out the reaction D-aspartate + O2 + H2O = oxaloacetate + H2O2 + NH4(+). The enzyme catalyses D-glutamate + O2 + H2O = H2O2 + 2-oxoglutarate + NH4(+). Functionally, selectively catalyzes the oxidative deamination of acidic amino acids. Plays a role in the egg-laying events and maturation processes of the reproductive organs. The chain is D-aspartate oxidase 3 (ddo-3) from Caenorhabditis elegans.